The chain runs to 364 residues: Mannose-1-phosphate guanyltransferase (364 aa).

The protein belongs to the transferase hexapeptide repeat family.

It is found in the cytoplasm. The catalysed reaction is alpha-D-mannose 1-phosphate + GTP + H(+) = GDP-alpha-D-mannose + diphosphate. It participates in nucleotide-sugar biosynthesis; GDP-alpha-D-mannose biosynthesis; GDP-alpha-D-mannose from alpha-D-mannose 1-phosphate (GTP route): step 1/1. Involved in cell wall synthesis where it is required for glycosylation. Involved in cell cycle progression through cell-size checkpoint. The sequence is that of Mannose-1-phosphate guanyltransferase (MPG1) from Gibberella zeae (strain ATCC MYA-4620 / CBS 123657 / FGSC 9075 / NRRL 31084 / PH-1) (Wheat head blight fungus).